Here is a 943-residue protein sequence, read N- to C-terminus: Leucine--tRNA ligase (943 aa).

A 'HIGH' region motif is present at residues 40 to 51 (PYPSGAGLHVGH). Positions 717–721 (KMSKS) match the 'KMSKS' region motif. Lysine 720 lines the ATP pocket.

It belongs to the class-I aminoacyl-tRNA synthetase family.

The protein localises to the cytoplasm. The catalysed reaction is tRNA(Leu) + L-leucine + ATP = L-leucyl-tRNA(Leu) + AMP + diphosphate. The sequence is that of Leucine--tRNA ligase from Bacteroides fragilis (strain ATCC 25285 / DSM 2151 / CCUG 4856 / JCM 11019 / LMG 10263 / NCTC 9343 / Onslow / VPI 2553 / EN-2).